Here is a 144-residue protein sequence, read N- to C-terminus: Large ribosomal subunit protein uL11 (144 aa).

Belongs to the universal ribosomal protein uL11 family. As to quaternary structure, part of the ribosomal stalk of the 50S ribosomal subunit. Interacts with L10 and the large rRNA to form the base of the stalk. L10 forms an elongated spine to which L12 dimers bind in a sequential fashion forming a multimeric L10(L12)X complex. One or more lysine residues are methylated.

Its function is as follows. Forms part of the ribosomal stalk which helps the ribosome interact with GTP-bound translation factors. This is Large ribosomal subunit protein uL11 from Rickettsia bellii (strain OSU 85-389).